A 235-amino-acid chain; its full sequence is Large ribosomal subunit protein uL1 (235 aa).

The protein belongs to the universal ribosomal protein uL1 family. As to quaternary structure, part of the 50S ribosomal subunit.

In terms of biological role, binds directly to 23S rRNA. The L1 stalk is quite mobile in the ribosome, and is involved in E site tRNA release. Its function is as follows. Protein L1 is also a translational repressor protein, it controls the translation of the L11 operon by binding to its mRNA. This chain is Large ribosomal subunit protein uL1, found in Nitratidesulfovibrio vulgaris (strain ATCC 29579 / DSM 644 / CCUG 34227 / NCIMB 8303 / VKM B-1760 / Hildenborough) (Desulfovibrio vulgaris).